Consider the following 963-residue polypeptide: Spliceosome associated factor 3, U4/U6 recycling protein (963 aa).

Residues methionine 1–glutamate 11 are compositionally biased toward low complexity. Disordered stretches follow at residues methionine 1–arginine 36 and lysine 49–glutamate 86. Position 2 is an N-acetylalanine (alanine 2). Residues alanine 2–serine 351 are mediates interaction with PRPF3. Serine 10 and serine 16 each carry phosphoserine. The segment covering alanine 14–aspartate 23 has biased composition (basic and acidic residues). The stretch at lysine 21–alanine 46 forms a coiled coil. Residues glutamine 57–glutamate 69 show a composition bias toward acidic residues. Residues glutamate 82–tyrosine 110 adopt a coiled-coil conformation. 8 HAT repeats span residues glycine 126 to serine 158, leucine 164 to glycine 195, glycine 201 to alanine 237, alanine 242 to aspartate 275, glycine 324 to arginine 356, lysine 359 to arginine 391, valine 394 to arginine 430, and asparagine 487 to alanine 520. Serine 215 carries the phosphoserine modification. Positions asparagine 487–alanine 520 are required for interaction with USP4. Residues cysteine 537–asparagine 953 are necessary and sufficient for U6 snRNA binding. Residues leucine 559–glycine 619 adopt a coiled-coil conformation. The required for nuclear localization stretch occupies residues glutamine 600–cysteine 670. Residues arginine 601 to lysine 608 carry the Nuclear localization signal motif. Residues lysine 608 to glycine 619 are compositionally biased toward basic and acidic residues. The disordered stretch occupies residues lysine 608–proline 712. Residues proline 620–aspartate 635 are compositionally biased toward basic residues. Over residues arginine 644 to threonine 657 the composition is skewed to acidic residues. A Phosphoserine modification is found at serine 650. Threonine 657 carries the phosphothreonine modification. The segment covering valine 695–proline 712 has biased composition (basic and acidic residues). Residues isoleucine 704–aspartate 782 form the RRM 1 domain. Residues serine 769, serine 795, and serine 852 each carry the phosphoserine modification. An RRM 2 domain is found at histidine 801 to proline 878. A compositionally biased stretch (basic and acidic residues) spans proline 900–glycine 909. The residue at position 906 (arginine 906) is an Omega-N-methylarginine.

In terms of assembly, component of the 7SK snRNP complex at least composed of P-TEFb (composed of CDK9 and CCNT1/cyclin-T1), HEXIM1, HEXIM2, BCDIN3, SART3 proteins and 7SK and U6 snRNAs. Interacts with AGO1 and AGO2. Interacts with PRPF3 and USP4; the interaction with PRPF3 is direct and recruits USP4 to its substrate PRPF3. Interacts with USP15; the interaction is direct.

It is found in the nucleus. The protein localises to the nucleoplasm. The protein resides in the cajal body. Its subcellular location is the nucleus speckle. It localises to the cytoplasm. Functionally, U6 snRNP-binding protein that functions as a recycling factor of the splicing machinery. Promotes the initial reassembly of U4 and U6 snRNPs following their ejection from the spliceosome during its maturation. Also binds U6atac snRNPs and may function as a recycling factor for U4atac/U6atac spliceosomal snRNP, an initial step in the assembly of U12-type spliceosomal complex. The U12-type spliceosomal complex plays a role in the splicing of introns with non-canonical splice sites. May also function as a substrate-targeting factor for deubiquitinases like USP4 and USP15. Recruits USP4 to ubiquitinated PRPF3 within the U4/U5/U6 tri-snRNP complex, promoting PRPF3 deubiquitination and thereby regulating the spliceosome U4/U5/U6 tri-snRNP spliceosomal complex disassembly. May also recruit the deubiquitinase USP15 to histone H2B and mediate histone deubiquitination, thereby regulating gene expression and/or DNA repair. May play a role in hematopoiesis probably through transcription regulation of specific genes including MYC. The sequence is that of Spliceosome associated factor 3, U4/U6 recycling protein from Pongo abelii (Sumatran orangutan).